The following is a 38-amino-acid chain: MKVRASLKKRTPECKIVRRNGRLYVINKKNPKYKQRQG.

This sequence belongs to the bacterial ribosomal protein bL36 family.

The polypeptide is Large ribosomal subunit protein bL36 (Bacteroides fragilis (strain ATCC 25285 / DSM 2151 / CCUG 4856 / JCM 11019 / LMG 10263 / NCTC 9343 / Onslow / VPI 2553 / EN-2)).